The following is a 358-amino-acid chain: Isopentenyl-diphosphate delta-isomerase (358 aa).

12 to 13 provides a ligand contact to substrate; that stretch reads RK. FMN contacts are provided by residues 69-71, S99, and N128; that span reads AMT. Q158 is a binding site for substrate. E159 serves as a coordination point for Mg(2+). Residues K190, T220, 267 to 269, and 288 to 289 each bind FMN; these read GIR and AG.

It belongs to the IPP isomerase type 2 family. Homooctamer. Dimer of tetramers. FMN is required as a cofactor. NADPH serves as cofactor. The cofactor is Mg(2+).

Its subcellular location is the cytoplasm. It carries out the reaction isopentenyl diphosphate = dimethylallyl diphosphate. In terms of biological role, involved in the biosynthesis of isoprenoids. Catalyzes the 1,3-allylic rearrangement of the homoallylic substrate isopentenyl (IPP) to its allylic isomer, dimethylallyl diphosphate (DMAPP). The chain is Isopentenyl-diphosphate delta-isomerase from Listeria monocytogenes serotype 4b (strain F2365).